The primary structure comprises 410 residues: Ribonucleoside-diphosphate reductase small chain (410 aa).

The span at 1-20 shows a compositional bias: polar residues; it reads MSVQTSPSKQVTSGIQNLNM. 2 disordered regions span residues 1 to 43 and 55 to 78; these read MSVQ…DEDL and NANK…ANEP. Basic and acidic residues-rich tracts occupy residues 23-43 and 55-65; these read PAKK…DEDL and NANKKAAEAKK. Residues Asp-146, Glu-177, and His-180 each contribute to the Fe cation site. Tyr-184 is an active-site residue. Residues Glu-240, Glu-274, and His-277 each coordinate Fe cation.

Belongs to the ribonucleoside diphosphate reductase small chain family. In terms of assembly, heterodimer of a large and a small subunit. Fe cation is required as a cofactor.

It carries out the reaction a 2'-deoxyribonucleoside 5'-diphosphate + [thioredoxin]-disulfide + H2O = a ribonucleoside 5'-diphosphate + [thioredoxin]-dithiol. Its function is as follows. Provides the precursors necessary for DNA synthesis. Catalyzes the biosynthesis of deoxyribonucleotides from the corresponding ribonucleotides. The sequence is that of Ribonucleoside-diphosphate reductase small chain (rnr-2) from Neurospora crassa (strain ATCC 24698 / 74-OR23-1A / CBS 708.71 / DSM 1257 / FGSC 987).